Here is a 414-residue protein sequence, read N- to C-terminus: MSYIEKQEFLTELKTRNILKDISSPEKFFNLKPDQGIYIGFDPTATSLHLGNYISISLLKRLQKIGIKVLAVIGGATGMIGDPSFSSKERKLLDFKTLNANKEKIKKQLESFGLPVFDNFEIYKNMNILDFLRDVGKNINISYLLAKESVASRIEVGLSFTEFSYQLIQGWDFKFLAENYQIIGQAGGSDQWGNMVTGLDFIKKSNLVQKDEAFVFTTNLLTDENGQKFGKSLGKPIWLDPEMYSPFHLYQFLLNQNDEQAEKIMLWLSFLDLKVINELIFKHKNDKKQRILQYNLAQEVVFNIHGDKGLKIAKKITKILFEKLDYTEITFKDKLELKKIIPYFKVSFFNANQIIDLGIFKSKRELNEFISHKALEINGSKISNIGDITEELKDKSNLFLLRKGKKYFFIIELI.

Tyr38 contributes to the L-tyrosine binding site. Positions 43–52 match the 'HIGH' region motif; the sequence is PTATSLHLGN. Residues Tyr165 and Gln169 each coordinate L-tyrosine. Positions 228–232 match the 'KMSKS' region motif; that stretch reads KFGKS. Residue Lys231 participates in ATP binding. The S4 RNA-binding domain occupies 349–414; sequence FNANQIIDLG…KKYFFIIELI (66 aa).

It belongs to the class-I aminoacyl-tRNA synthetase family. TyrS type 1 subfamily. As to quaternary structure, homodimer.

It is found in the cytoplasm. It catalyses the reaction tRNA(Tyr) + L-tyrosine + ATP = L-tyrosyl-tRNA(Tyr) + AMP + diphosphate + H(+). In terms of biological role, catalyzes the attachment of tyrosine to tRNA(Tyr) in a two-step reaction: tyrosine is first activated by ATP to form Tyr-AMP and then transferred to the acceptor end of tRNA(Tyr). This is Tyrosine--tRNA ligase from Mesomycoplasma hyopneumoniae (strain 232) (Mycoplasma hyopneumoniae).